Here is a 136-residue protein sequence, read N- to C-terminus: Histone H3.2 (136 aa).

The interval Met-1–Arg-43 is disordered. 2 positions are modified to N6,N6,N6-trimethyllysine; alternate: Lys-5 and Lys-10. 2 positions are modified to N6,N6-dimethyllysine; alternate: Lys-5 and Lys-10. N6-methyllysine; alternate is present on residues Lys-5 and Lys-10. Lys-10 carries the N6-acetyllysine; alternate modification. Ser-11 bears the Phosphoserine mark. Thr-12 carries the post-translational modification Phosphothreonine. N6-acetyllysine is present on Lys-15. Lys-19, Lys-24, and Lys-28 each carry N6-methyllysine; alternate. Lys-19 and Lys-24 each carry N6-acetyllysine; alternate. Lys-28 bears the N6,N6,N6-trimethyllysine; alternate mark. Lys-28 is subject to N6,N6-dimethyllysine; alternate. Position 29 is a phosphoserine (Ser-29). N6,N6,N6-trimethyllysine; alternate is present on Lys-37. The residue at position 37 (Lys-37) is an N6,N6-dimethyllysine; alternate. Lys-37 bears the N6-methyllysine; alternate mark.

Belongs to the histone H3 family. In terms of assembly, the nucleosome is a histone octamer containing two molecules each of H2A, H2B, H3 and H4 assembled in one H3-H4 heterotetramer and two H2A-H2B heterodimers. The octamer wraps approximately 147 bp of DNA. Acetylation is generally linked to gene activation. Can be acetylated to form H3K9ac, H3K14ac, H3K18ac and H3K23ac. H3K9ac could compete with H3K9me and prevent gene silencing. H3K9ac is restricted to euchromatin. In terms of processing, methylated to form mainly H3K4me, H3K9me, H3K18me, H3K23me, H3K27me and H3K36me. H3K4me1/2/3, H3K9me3, H3K27me3 and H3K36me1/2/3 are typical marks for euchromatin, whereas heterochromatic chromocenters are enriched in H3K9me1/2 and H3K27me1/2. H2BK143ub1 is probably prerequisite for H3K4me. Post-translationally, can be phosphorylated to form H3S10ph, H3T11ph and H3S28ph.

The protein resides in the nucleus. It is found in the chromosome. Core component of nucleosome. Nucleosomes wrap and compact DNA into chromatin, limiting DNA accessibility to the cellular machineries which require DNA as a template. Histones thereby play a central role in transcription regulation, DNA repair, DNA replication and chromosomal stability. DNA accessibility is regulated via a complex set of post-translational modifications of histones, also called histone code, and nucleosome remodeling. This Brassica napus (Rape) protein is Histone H3.2.